We begin with the raw amino-acid sequence, 1038 residues long: Elongation factor 3 (1038 aa).

HEAT repeat units follow at residues 93–131 (EAYL…SANK), 133–170 (STIR…VAPY), 174–211 (RCLP…VVGN), 213–249 (DIEP…TVEA), 255–287 (MEPL…LMDD), and 292–331 (QLFI…AGGS). Glu-406 provides a ligand contact to ADP. 2 consecutive ABC transporter domains span residues 426-654 (IFIE…YYEL) and 680-995 (IRLT…EEVT). 4 residues coordinate ADP: Asn-716, Glu-924, Asn-927, and His-953. The interval 1012–1038 (RKEKKAKDKARKEAEARGEYYSDSDEE) is disordered. The segment covering 1021–1031 (ARKEAEARGEY) has biased composition (basic and acidic residues).

It belongs to the ABC transporter superfamily. ABCF family. EF3 subfamily. As to quaternary structure, monomer.

The protein localises to the cytoplasm. The catalysed reaction is ATP + H2O = ADP + phosphate + H(+). The protein operates within protein biosynthesis; polypeptide chain elongation. In terms of biological role, ribosome-dependent ATPase that functions in cytoplasmic translation elongation. Required for the ATP-dependent release of deacylated tRNA from the ribosomal E-site during protein biosynthesis. Stimulates the eEF1A-dependent binding of aminoacyl-tRNA to the ribosomal A-site, which has reduced affinity for tRNA as long as the E-site is occupied. Assists translation termination by stimulating the release of nascent protein from the ribosome by release factors. The protein is Elongation factor 3 of Phytophthora infestans (strain T30-4) (Potato late blight agent).